Here is a 716-residue protein sequence, read N- to C-terminus: DNA ligase (716 aa).

Residues 47–51 (DATYD), 96–97 (SL), and glutamate 130 each bind NAD(+). Lysine 132 acts as the N6-AMP-lysine intermediate in catalysis. Arginine 153, glutamate 190, lysine 306, and lysine 330 together coordinate NAD(+). Zn(2+) is bound by residues cysteine 435, cysteine 438, cysteine 453, and cysteine 459. The 79-residue stretch at 638-716 (RSDSAVAGKT…EDEWLKLIEG (79 aa)) folds into the BRCT domain.

This sequence belongs to the NAD-dependent DNA ligase family. LigA subfamily. Mg(2+) serves as cofactor. The cofactor is Mn(2+).

It catalyses the reaction NAD(+) + (deoxyribonucleotide)n-3'-hydroxyl + 5'-phospho-(deoxyribonucleotide)m = (deoxyribonucleotide)n+m + AMP + beta-nicotinamide D-nucleotide.. Functionally, DNA ligase that catalyzes the formation of phosphodiester linkages between 5'-phosphoryl and 3'-hydroxyl groups in double-stranded DNA using NAD as a coenzyme and as the energy source for the reaction. It is essential for DNA replication and repair of damaged DNA. This Nitrobacter winogradskyi (strain ATCC 25391 / DSM 10237 / CIP 104748 / NCIMB 11846 / Nb-255) protein is DNA ligase.